The following is a 104-amino-acid chain: Enhancer of rudimentary homolog 1 (104 aa).

The protein belongs to the E(R) family. As to quaternary structure, homodimer. Component of the erh1-mmi1 complex. Interacts with mmi1 (via N-terminus) in a 2:2 stoichiometry.

The protein localises to the nucleus. Its subcellular location is the cytoplasm. Forms part of the erh1-mmi1 complex that recruits the CCR4-NOT complex and the NURS complex to target RNAs. Suppresses the meiotic program during vegetative growth and promotes the meiotic program during mating. Recruitment of the NURS complex to target mRNAs promotes mRNA decay by engagement of the nuclear exosome, and formation of heterochromatin islands at meiotic genes silenced by the exosome. Recruitment of the CCR4-NOT complex to target RNAs promotes heterochromatin formation at RNAi-dependent heterochromatin domains (HOODs), including a subset of meiotic genes, lncRNAs and retrotransposons. Recruitment of the CCR4-NOT complex to rDNA promotes rDNA heterochromatin assembly. In Schizosaccharomyces pombe (strain 972 / ATCC 24843) (Fission yeast), this protein is Enhancer of rudimentary homolog 1.